Consider the following 245-residue polypeptide: Carbohydrate deacetylase (245 aa).

Residues His61 and His122 each contribute to the Mg(2+) site.

The protein belongs to the YdjC deacetylase family. It depends on Mg(2+) as a cofactor.

Probably catalyzes the deacetylation of acetylated carbohydrates an important step in the degradation of oligosaccharides. The chain is Carbohydrate deacetylase (celC) from Geobacillus stearothermophilus (Bacillus stearothermophilus).